A 69-amino-acid chain; its full sequence is uncharacterized protein (69 aa).

The first 18 residues, 1 to 18 (MAMLWISMFIIMRKYGRS), serve as a signal peptide directing secretion. Residues 17–69 (RSSSSSSSSSSSSSSSSSSSSSSSSSSSSSSSSSSSSSSSSGSSSNSNRVVVV) are disordered. A compositionally biased stretch (low complexity) spans 18–61 (SSSSSSSSSSSSSSSSSSSSSSSSSSSSSSSSSSSSSSSSGSSS).

It is found in the secreted. This is an uncharacterized protein from Dictyostelium discoideum (Social amoeba).